Consider the following 361-residue polypeptide: Chorismate synthase (361 aa).

The NADP(+) site is built by R48 and R54. FMN is bound by residues 125 to 127, 238 to 239, G278, 293 to 297, and R319; these read RSS, NA, and KPTSS.

This sequence belongs to the chorismate synthase family. In terms of assembly, homotetramer. It depends on FMNH2 as a cofactor.

The enzyme catalyses 5-O-(1-carboxyvinyl)-3-phosphoshikimate = chorismate + phosphate. Its pathway is metabolic intermediate biosynthesis; chorismate biosynthesis; chorismate from D-erythrose 4-phosphate and phosphoenolpyruvate: step 7/7. Functionally, catalyzes the anti-1,4-elimination of the C-3 phosphate and the C-6 proR hydrogen from 5-enolpyruvylshikimate-3-phosphate (EPSP) to yield chorismate, which is the branch point compound that serves as the starting substrate for the three terminal pathways of aromatic amino acid biosynthesis. This reaction introduces a second double bond into the aromatic ring system. The sequence is that of Chorismate synthase from Vibrio vulnificus (strain CMCP6).